The primary structure comprises 320 residues: MGPWSRVRVAKCQMLVTCFFILLLGLSVATMVTLTYFGAHFAVIRRASLEKNPYQAVHQWAFSAGLSLVGLLTLGAVLSAAATVREAQGLMAGGFLCFSLAFCAQVQVVFWRLHSPTQVEDAMLDTYDLVYEQAMKGTSHVRRQELAAIQDVFLCCGKKSPFSRLGSTEADLCQGEEAAREDCLQGIRSFLRTHQQVASSLTSIGLALTVSALLFSSFLWFAIRCGCSLDRKGKYTLTPRACGRQPQEPSLLRCSQGGPTHCLHSEAVAIGPRGCSGSLRWLQESDAAPLPLSCHLAAHRALQGRSRGGLSGCPERGLSD.

Helical transmembrane passes span 14–34, 60–80, 90–110, and 203–223; these read MLVT…MVTL, WAFS…VLSA, LMAG…QVVF, and SIGL…WFAI.

The protein belongs to the tetraspanin (TM4SF) family. In terms of tissue distribution, expressed ubiquitously at low levels. High levels of expression are confined to hematopoietic tissues including peripheral blood leukocytes, thymus and spleen.

It is found in the membrane. In Homo sapiens (Human), this protein is Tetraspanin-32 (TSPAN32).